Consider the following 222-residue polypeptide: Protein CicA (222 aa).

This is Protein CicA (cicA) from Caulobacter vibrioides (strain ATCC 19089 / CIP 103742 / CB 15) (Caulobacter crescentus).